A 1568-amino-acid polypeptide reads, in one-letter code: MAGVGAAALSLLLHLGALALAAGAEGGAVPREPPGQQTTAHSSVLAGNSQEQWHPLREWLGRLEAAVMELREQNKDLQTRVRQLESCECHPASPQCWGLGRAWPEGARWEPDACTACVCQDGAAHCGPQAHLPHCRGCSQNGQTYGNGETFSPDACTTCRCLTGAVQCQGPSCSELNCLESCTPPGECCPICRPGCDYEGQLYEEGVTFLSSSNPCLQCTCLRSRVRCMALKCPPSPCPEPVLRPGHCCPTCQGCTEGGSHWEHGQEWTTPGDPCRICRCLEGHIQCRQRECASLCPYPARPLPGTCCPVCDGCFLNGREHRSGEPVGSGDPCSHCRCANGSVQCEPLPCPPVPCRHPGKIPGQCCPVCDGCEYQGHQYQSQETFRLQERGLCVRCSCQAGEVSCEEQECPVTPCALPASGRQLCPACELDGEEFAEGVQWEPDGRPCTACVCQDGVPKCGAVLCPPAPCQHPTQPPGACCPSCDSCTYHSQVYANGQNFTDADSPCHACHCQDGTVTCSLVDCPPTTCARPQSGPGQCCPRCPDCILEEEVFVDGESFSHPRDPCQECRCQEGHAHCQPRPCPRAPCAHPLPGTCCPNDCSGCAFGGKEYPSGADFPHPSDPCRLCRCLSGNVQCLARRCVPLPCPEPVLLPGECCPQCPAAPAPAGCPRPGAAHARHQEYFSPPGDPCRRCLCLDGSVSCQRLPCPPAPCAHPRQGPCCPSCDGCLYQGKEFASGERFPSPTAACHLCLCWEGSVSCEPKACAPALCPFPARGDCCPDCDGCEYLGESYLSNQEFPDPREPCNLCTCLGGFVTCGRRPCEPPGCSHPLIPSGHCCPTCQGCRYHGVTTASGETLPDPLDPTCSLCTCQEGSMRCQKKPCPPALCPHPSPGPCFCPVCHSCLSQGREHQDGEEFEGPAGSCEWCRCQAGQVSCVRLQCPPLPCKLQVTERGSCCPRCRGCLAHGEEHPEGSRWVPPDSACSSCVCHEGVVTCARIQCISSCAQPRQGPHDCCPQCSDCEHEGRKYEPGESFQPGADPCEVCICEPQPEGPPSLRCHRRQCPSLVGCPPSQLLPPGPQHCCPTCAEALSNCSEGLLGSELAPPDPCYTCQCQDLTWLCIHQACPELSCPLSERHTPPGSCCPVCRAPTQSCVHQGREVASGERWTVDTCTSCSCMAGTVRCQSQRCSPLSCGPDKAPALSPGSCCPRCLPRPASCMAFGDPHYRTFDGRLLHFQGSCSYVLAKDCHSGDFSVHVTNDDRGRSGVAWTQEVAVLLGDMAVRLLQDGAVTVDGHPVALPFLQEPLLYVELRGHTVILHAQPGLQVLWDGQSQVEVSVPGSYQGRTCGLCGNFNGFAQDDLQGPEGLLLPSEAAFGNSWQVSEGLWPGRPCSAGREVDPCRAAGYRARREANARCGVLKSSPFSRCHAVVPPEPFFAACVYDLCACGPGSSADACLCDALEAYASHCRQAGVTPTWRGPTLCVVGCPLERGFVFDECGPPCPRTCFNQHIPLGELAAHCVRPCVPGCQCPAGLVEHEAHCIPPEACPQVLLTGDQPLGARPSPSREPQETP.

The signal sequence occupies residues Met1–Gly23. The segment at Gly27 to Ser49 is disordered. A compositionally biased stretch (polar residues) spans Gly35–Ser49. The stretch at Leu60–Cys87 forms a coiled coil. VWFC domains are found at residues Arg136 to Arg193, Pro194 to Gln253, Gln253 to Asp312, Asp312 to Asp370, Pro426 to Asp485, Asp485 to Pro544, Pro544 to Ser602, Ser602 to Pro661, Ala667 to Asp725, Asp725 to Asp782, Asp782 to Gln841, His900 to Arg959, Arg959 to Ser1017, Ser1017 to Ala1085, Pro1082 to Arg1145, and Gln1149 to Leu1209. Residue Asn340 is glycosylated (N-linked (GlcNAc...) asparagine). Asn499 carries N-linked (GlcNAc...) asparagine glycosylation. Asn1090 is a glycosylation site (N-linked (GlcNAc...) asparagine). Residues Ala1213–Ser1389 form the VWFD domain. Cystine bridges form between Cys1215-Cys1347 and Cys1237-Cys1388. Residues Cys1483–Cys1543 enclose the TIL domain.

Interacts with BMP7 and, by doing so, enhances binding to the type I receptors that contains cytoplasmic serine/threonine protein kinase domains. Also able to interact with activin-A and TGFB1.

The protein resides in the secreted. Enhances bone morphogenetic protein (BMP) signaling in a paracrine manner. In contrast, it inhibits both the activin-A and TGFB1-mediated signaling pathways. In Homo sapiens (Human), this protein is Kielin/chordin-like protein.